The primary structure comprises 660 residues: tRNA 5-methylaminomethyl-2-thiouridine biosynthesis bifunctional protein MnmC (660 aa).

The interval 1–241 (MNDHPAQDAF…KREILRGHLQ (241 aa)) is tRNA (mnm(5)s(2)U34)-methyltransferase. The interval 268–660 (IGAGLAGCAT…FLLRKLIRGT (393 aa)) is FAD-dependent cmnm(5)s(2)U34 oxidoreductase.

The protein in the N-terminal section; belongs to the methyltransferase superfamily. tRNA (mnm(5)s(2)U34)-methyltransferase family. In the C-terminal section; belongs to the DAO family. FAD is required as a cofactor.

The protein localises to the cytoplasm. It catalyses the reaction 5-aminomethyl-2-thiouridine(34) in tRNA + S-adenosyl-L-methionine = 5-methylaminomethyl-2-thiouridine(34) in tRNA + S-adenosyl-L-homocysteine + H(+). In terms of biological role, catalyzes the last two steps in the biosynthesis of 5-methylaminomethyl-2-thiouridine (mnm(5)s(2)U) at the wobble position (U34) in tRNA. Catalyzes the FAD-dependent demodification of cmnm(5)s(2)U34 to nm(5)s(2)U34, followed by the transfer of a methyl group from S-adenosyl-L-methionine to nm(5)s(2)U34, to form mnm(5)s(2)U34. The polypeptide is tRNA 5-methylaminomethyl-2-thiouridine biosynthesis bifunctional protein MnmC (Stutzerimonas stutzeri (strain A1501) (Pseudomonas stutzeri)).